A 454-amino-acid polypeptide reads, in one-letter code: Golgi reassembly-stacking protein 2 (454 aa).

Glycine 2 carries the N-myristoyl glycine lipid modification. PDZ GRASP-type domains follow at residues 15 to 105 (EGYH…FCSF) and 111 to 199 (NVWH…YGYL). Residues 15-215 (EGYHVLRVQE…PFEEGKKISL (201 aa)) form a GRASP region. Dimethylated arginine occurs at positions 30 and 47. The segment at 194 to 199 (IGYGYL) is important for membrane binding. Serine 214 is modified (phosphoserine). At threonine 222 the chain carries Phosphothreonine. At threonine 225 the chain carries Phosphothreonine; by MAPK. The disordered stretch occupies residues 377–454 (EGSSAASAGE…VTDANASGAS (78 aa)). Serine 411 bears the Phosphoserine mark. Residue threonine 435 is modified to Phosphothreonine. 2 positions are modified to phosphoserine: serine 443 and serine 451.

The protein belongs to the GORASP family. Homodimer. Homooligomer. ER stress induces phosphorylation-dependent monomerization. Interacts with BLZF1/Golgin 45. Identified in a complex with RAB2 and GORASP2. Interacts with JAM2 and JAM3. Interacts with members of the p24 cargo receptors. Interacts with CNIH1 and the cytoplasmic domain of transmembrane TGFA, prior its transit in the trans-Golgi. Interacts with KCTD5. Interacts with TMED2 and TMED3. Interacts with SEC16A in response to ER stress. Interacts (via PDZ GRASP-type 1 domain) with core-glycosylated CFTR in response to ER stress. In terms of processing, myristoylated. Myristoylation is essential for the Golgi targeting. Post-translationally, palmitoylated. Phosphorylated in mitotic cells. ER stress-induced phosphorylation at Ser-443 induces monomerization and subsequent relocalization from Golgi to ER which is essential for mediating unconventional (ER/Golgi-independent) trafficking of CFTR to the cell membrane. Detected in lung, brain, heart, liver and testis.

It is found in the golgi apparatus membrane. The protein localises to the endoplasmic reticulum membrane. It localises to the golgi apparatus. Its function is as follows. Key structural protein of the Golgi apparatus. The membrane cisternae of the Golgi apparatus adhere to each other to form stacks, which are aligned side by side to form the Golgi ribbon. Acting in concert with GORASP1/GRASP65, is required for the formation and maintenance of the Golgi ribbon, and may be dispensable for the formation of stacks. However, other studies suggest that GORASP2 plays a role in the assembly and membrane stacking of the Golgi cisternae, and in the process by which Golgi stacks reform after breakdown during mitosis and meiosis. May regulate the intracellular transport and presentation of a defined set of transmembrane proteins, such as transmembrane TGFA. Required for normal acrosome formation during spermiogenesis and normal male fertility, probably by promoting colocalization of JAM2 and JAM3 at contact sites between germ cells and Sertoli cells. Mediates ER stress-induced unconventional (ER/Golgi-independent) trafficking of core-glycosylated CFTR to cell membrane. The protein is Golgi reassembly-stacking protein 2 (Gorasp2) of Rattus norvegicus (Rat).